We begin with the raw amino-acid sequence, 58 residues long: Ribulose bisphosphate carboxylase large chain (58 aa).

A propeptide spanning residues 1 to 2 is cleaved from the precursor; the sequence is MS. The residue at position 3 (Pro-3) is an N-acetylproline. Lys-14 carries the N6,N6,N6-trimethyllysine modification.

Belongs to the RuBisCO large chain family. Type I subfamily. In terms of assembly, heterohexadecamer of 8 large chains and 8 small chains.

It is found in the plastid. Its subcellular location is the chloroplast. It carries out the reaction 2 (2R)-3-phosphoglycerate + 2 H(+) = D-ribulose 1,5-bisphosphate + CO2 + H2O. The enzyme catalyses D-ribulose 1,5-bisphosphate + O2 = 2-phosphoglycolate + (2R)-3-phosphoglycerate + 2 H(+). Functionally, ruBisCO catalyzes two reactions: the carboxylation of D-ribulose 1,5-bisphosphate, the primary event in carbon dioxide fixation, as well as the oxidative fragmentation of the pentose substrate in the photorespiration process. Both reactions occur simultaneously and in competition at the same active site. The sequence is that of Ribulose bisphosphate carboxylase large chain (rbcL) from Rosa damascena (Damask rose).